A 143-amino-acid chain; its full sequence is Putative 2'-deoxynucleoside 5'-phosphate N-hydrolase 1 (143 aa).

Substrate contacts are provided by residues H37, E82, and 106-108; that span reads SAM.

Belongs to the 2'-deoxynucleoside 5'-phosphate N-hydrolase 1 family. Monomer and homodimer.

The enzyme catalyses a pyrimidine 2'-deoxyribonucleoside 5'-phosphate + H2O = a pyrimidine nucleobase + 2-deoxy-D-ribose 5-phosphate. It carries out the reaction a purine 2'-deoxyribonucleoside 5'-phosphate + H2O = a purine nucleobase + 2-deoxy-D-ribose 5-phosphate. Catalyzes the cleavage of the N-glycosidic bond of deoxyribonucleoside 5'-monophosphates to yield deoxyribose 5-phosphate and a purine or pyrimidine base. The chain is Putative 2'-deoxynucleoside 5'-phosphate N-hydrolase 1 from Thermofilum pendens (strain DSM 2475 / Hrk 5).